The primary structure comprises 289 residues: RING-H2 finger protein ATL30 (289 aa).

Residues 26-46 traverse the membrane as a helical segment; that stretch reads VIILTVILLVVFFIGFFAIYF. The segment at 114–157 adopts an RING-type; atypical zinc-finger fold; it reads CAICLLEFEEEHILLRLLTTCYHVFHQECIDQWLESNKTCPVCR. Residues 181–206 form a disordered region; that stretch reads HENRDQEQTSTSNEVMLSRQSSGNNE. A compositionally biased stretch (polar residues) spans 188-204; sequence QTSTSNEVMLSRQSSGN.

This sequence belongs to the RING-type zinc finger family. ATL subfamily.

The protein localises to the membrane. The enzyme catalyses S-ubiquitinyl-[E2 ubiquitin-conjugating enzyme]-L-cysteine + [acceptor protein]-L-lysine = [E2 ubiquitin-conjugating enzyme]-L-cysteine + N(6)-ubiquitinyl-[acceptor protein]-L-lysine.. Its pathway is protein modification; protein ubiquitination. In Arabidopsis thaliana (Mouse-ear cress), this protein is RING-H2 finger protein ATL30 (ATL30).